The primary structure comprises 292 residues: Phosphatidylserine decarboxylase proenzyme (292 aa).

Active-site charge relay system; for autoendoproteolytic cleavage activity residues include Asp-92, His-149, and Ser-256. Ser-256 serves as the catalytic Schiff-base intermediate with substrate; via pyruvic acid; for decarboxylase activity. Pyruvic acid (Ser); by autocatalysis is present on Ser-256.

This sequence belongs to the phosphatidylserine decarboxylase family. PSD-B subfamily. Prokaryotic type I sub-subfamily. In terms of assembly, heterodimer of a large membrane-associated beta subunit and a small pyruvoyl-containing alpha subunit. Pyruvate serves as cofactor. In terms of processing, is synthesized initially as an inactive proenzyme. Formation of the active enzyme involves a self-maturation process in which the active site pyruvoyl group is generated from an internal serine residue via an autocatalytic post-translational modification. Two non-identical subunits are generated from the proenzyme in this reaction, and the pyruvate is formed at the N-terminus of the alpha chain, which is derived from the carboxyl end of the proenzyme. The autoendoproteolytic cleavage occurs by a canonical serine protease mechanism, in which the side chain hydroxyl group of the serine supplies its oxygen atom to form the C-terminus of the beta chain, while the remainder of the serine residue undergoes an oxidative deamination to produce ammonia and the pyruvoyl prosthetic group on the alpha chain. During this reaction, the Ser that is part of the protease active site of the proenzyme becomes the pyruvoyl prosthetic group, which constitutes an essential element of the active site of the mature decarboxylase.

It localises to the cell membrane. It catalyses the reaction a 1,2-diacyl-sn-glycero-3-phospho-L-serine + H(+) = a 1,2-diacyl-sn-glycero-3-phosphoethanolamine + CO2. It functions in the pathway phospholipid metabolism; phosphatidylethanolamine biosynthesis; phosphatidylethanolamine from CDP-diacylglycerol: step 2/2. Functionally, catalyzes the formation of phosphatidylethanolamine (PtdEtn) from phosphatidylserine (PtdSer). This Baumannia cicadellinicola subsp. Homalodisca coagulata protein is Phosphatidylserine decarboxylase proenzyme.